Reading from the N-terminus, the 200-residue chain is Small ribosomal subunit protein uS4c (200 aa).

The tract at residues 20–42 (GLTRKTTTRTSRPGQHGTQARKP) is disordered. Positions 23–37 (RKTTTRTSRPGQHGT) are enriched in polar residues. Residues 90–152 (MRLDNVIFRL…PKSQSIVKNY (63 aa)) form the S4 RNA-binding domain.

Belongs to the universal ribosomal protein uS4 family. Part of the 30S ribosomal subunit. Contacts protein S5. The interaction surface between S4 and S5 is involved in control of translational fidelity.

The protein resides in the plastid. The protein localises to the chloroplast. Its function is as follows. One of the primary rRNA binding proteins, it binds directly to 16S rRNA where it nucleates assembly of the body of the 30S subunit. In terms of biological role, with S5 and S12 plays an important role in translational accuracy. This Guillardia theta (Cryptophyte) protein is Small ribosomal subunit protein uS4c (rps4).